Consider the following 139-residue polypeptide: Nucleoside diphosphate kinase (139 aa).

ATP is bound by residues Lys-10, Phe-58, Arg-86, Thr-92, Arg-104, and Asn-114. The active-site Pros-phosphohistidine intermediate is His-117.

The protein belongs to the NDK family. As to quaternary structure, homotetramer. It depends on Mg(2+) as a cofactor.

It localises to the cytoplasm. It catalyses the reaction a 2'-deoxyribonucleoside 5'-diphosphate + ATP = a 2'-deoxyribonucleoside 5'-triphosphate + ADP. The enzyme catalyses a ribonucleoside 5'-diphosphate + ATP = a ribonucleoside 5'-triphosphate + ADP. Its function is as follows. Major role in the synthesis of nucleoside triphosphates other than ATP. The ATP gamma phosphate is transferred to the NDP beta phosphate via a ping-pong mechanism, using a phosphorylated active-site intermediate. This chain is Nucleoside diphosphate kinase, found in Rhodococcus jostii (strain RHA1).